The chain runs to 356 residues: MPIAKVHRIATASPDDVSGLAAAIATGAIAPAGILAIFGKTEGNGCVNDFSRGFAVQSLQMLLRGHMGAAADEVCLVMSGGTEGGMSPHFLVFERAEGNAPEAAPALAIGRAHTPDLPFEALGRMGQVRMVAQAVRRAMAAAGITDPEDVHFVQVKCPLLTAMRVKEAEARGATTATSDTLKSMGLSRGASALGIALALGEVAEDALSDAVICADYGLWSARASCSSGIELLGHEIVVLGMSEGWSGPLAIAHGVMADAIDVTPVKAALSALGAEAGEATIVLAKAEPSRSGRIRGKRHTMLDDSDISPTRHARAFVAGALAGVVGHTEIYVSGGGEHQGPDGGGPVAVIAARTMG.

The interval 1-99 (MPIAKVHRIA…FLVFERAEGN (99 aa)) is RU A. Substrate is bound by residues arginine 52 and 79-80 (SG). The segment at 106–243 (ALAIGRAHTP…HEIVVLGMSE (138 aa)) is RU B. Lysine 156 is a catalytic residue. Residues arginine 188 and 226–227 (SS) contribute to the substrate site. The Nucleophile role is filled by serine 226. Positions 249-356 (LAIAHGVMAD…VAVIAARTMG (108 aa)) are RU C. Glutamate 287 serves as a coordination point for Mg(2+). Residues arginine 314 and 333-334 (SG) contribute to the substrate site. The Mg(2+) site is built by glycine 336, glutamine 339, glycine 340, proline 341, and glycine 344.

Belongs to the cyclic amide hydrolase (CyAH) family. In terms of assembly, homotetramer.

The catalysed reaction is cyanurate + H2O = 1-carboxybiuret + H(+). It functions in the pathway xenobiotic degradation; atrazine degradation; biuret from cyanurate: step 1/1. Inhibited by barbituric acid. Functionally, responsible for the hydrolysis of cyanuric acid, an intermediate formed during catabolism of s-triazine based compounds in herbicides such as atrazine and polymers such as melamine. Catalyzes the hydrolytic opening of the s-triazine ring of cyanuric acid (2,4,6-trihydroxy-s-triazine) to yield carbon dioxide and carboxybiuret, which spontaneously decarboxylates to biuret. In Azorhizobium caulinodans (strain ATCC 43989 / DSM 5975 / JCM 20966 / LMG 6465 / NBRC 14845 / NCIMB 13405 / ORS 571), this protein is Cyanuric acid amidohydrolase.